The chain runs to 522 residues: BTB/POZ domain-containing protein 3 (522 aa).

Residues 120-190 enclose the BTB domain; it reads ADVHFVVGPP…IYCDEIDLAA (71 aa). The BACK domain maps to 235–300; the sequence is FEEPDLTQRC…NWAEVECQRQ (66 aa).

Strongly expressed in the primary visual cortex.

It localises to the cytoplasm. It is found in the cytosol. The protein localises to the nucleus. Its function is as follows. Acts as a key regulator of dendritic field orientation during development of sensory cortex. Also directs dendrites toward active axon terminals when ectopically expressed. The chain is BTB/POZ domain-containing protein 3 (BTBD3) from Callithrix jacchus (White-tufted-ear marmoset).